The primary structure comprises 238 residues: 7-cyano-7-deazaguanine synthase 1 (238 aa).

14–24 (FSGGQDSATCL) serves as a coordination point for ATP. Zn(2+) contacts are provided by C202, C217, C220, and C223.

Belongs to the QueC family. Zn(2+) serves as cofactor.

It carries out the reaction 7-carboxy-7-deazaguanine + NH4(+) + ATP = 7-cyano-7-deazaguanine + ADP + phosphate + H2O + H(+). Its pathway is purine metabolism; 7-cyano-7-deazaguanine biosynthesis. Its function is as follows. Catalyzes the ATP-dependent conversion of 7-carboxy-7-deazaguanine (CDG) to 7-cyano-7-deazaguanine (preQ(0)). The sequence is that of 7-cyano-7-deazaguanine synthase 1 from Rhodopseudomonas palustris (strain HaA2).